The primary structure comprises 961 residues: Outer capsid protein VP2 (961 aa).

It belongs to the orbivirus VP2 family.

The protein localises to the virion. In terms of biological role, the VP2 protein is one of the two proteins (with VP5) which constitute the virus particle outer capsid. It is the major target of the host immunogenic response. Responsible for viral attachment to target host cell, probably by binding to sialic acid. This attachment induces virion internalization predominantly through clathrin-dependent endocytosis. The chain is Outer capsid protein VP2 (Segment-2) from Antilocapra americana (Pronghorn).